A 553-amino-acid polypeptide reads, in one-letter code: Dihydroxy-acid dehydratase (553 aa).

D78 contributes to the Mg(2+) binding site. C119 contacts [2Fe-2S] cluster. D120 and K121 together coordinate Mg(2+). K121 carries the N6-carboxylysine modification. C193 is a binding site for [2Fe-2S] cluster. E441 contributes to the Mg(2+) binding site. Catalysis depends on S467, which acts as the Proton acceptor.

Belongs to the IlvD/Edd family. Homodimer. It depends on [2Fe-2S] cluster as a cofactor. The cofactor is Mg(2+).

It catalyses the reaction (2R)-2,3-dihydroxy-3-methylbutanoate = 3-methyl-2-oxobutanoate + H2O. It carries out the reaction (2R,3R)-2,3-dihydroxy-3-methylpentanoate = (S)-3-methyl-2-oxopentanoate + H2O. It participates in amino-acid biosynthesis; L-isoleucine biosynthesis; L-isoleucine from 2-oxobutanoate: step 3/4. Its pathway is amino-acid biosynthesis; L-valine biosynthesis; L-valine from pyruvate: step 3/4. Functionally, functions in the biosynthesis of branched-chain amino acids. Catalyzes the dehydration of (2R,3R)-2,3-dihydroxy-3-methylpentanoate (2,3-dihydroxy-3-methylvalerate) into 2-oxo-3-methylpentanoate (2-oxo-3-methylvalerate) and of (2R)-2,3-dihydroxy-3-methylbutanoate (2,3-dihydroxyisovalerate) into 2-oxo-3-methylbutanoate (2-oxoisovalerate), the penultimate precursor to L-isoleucine and L-valine, respectively. This chain is Dihydroxy-acid dehydratase, found in Pelobacter propionicus (strain DSM 2379 / NBRC 103807 / OttBd1).